The chain runs to 304 residues: Acetyl-coenzyme A carboxylase carboxyl transferase subunit beta (304 aa).

A CoA carboxyltransferase N-terminal domain is found at Leu-25–Gln-294.

It belongs to the AccD/PCCB family. As to quaternary structure, acetyl-CoA carboxylase is a heterohexamer composed of biotin carboxyl carrier protein (AccB), biotin carboxylase (AccC) and two subunits each of ACCase subunit alpha (AccA) and ACCase subunit beta (AccD).

It is found in the cytoplasm. The enzyme catalyses N(6)-carboxybiotinyl-L-lysyl-[protein] + acetyl-CoA = N(6)-biotinyl-L-lysyl-[protein] + malonyl-CoA. It participates in lipid metabolism; malonyl-CoA biosynthesis; malonyl-CoA from acetyl-CoA: step 1/1. In terms of biological role, component of the acetyl coenzyme A carboxylase (ACC) complex. Biotin carboxylase (BC) catalyzes the carboxylation of biotin on its carrier protein (BCCP) and then the CO(2) group is transferred by the transcarboxylase to acetyl-CoA to form malonyl-CoA. The polypeptide is Acetyl-coenzyme A carboxylase carboxyl transferase subunit beta (Sinorhizobium fredii (strain NBRC 101917 / NGR234)).